A 249-amino-acid polypeptide reads, in one-letter code: Phosphate import ATP-binding protein PstB 1 (249 aa).

An ABC transporter domain is found at 4–244 (FNIENLDLFY…PKDDRTQGYV (241 aa)). ATP is bound at residue 36–43 (GPSGCGKS).

The protein belongs to the ABC transporter superfamily. Phosphate importer (TC 3.A.1.7) family. As to quaternary structure, the complex is composed of two ATP-binding proteins (PstB), two transmembrane proteins (PstC and PstA) and a solute-binding protein (PstS).

The protein resides in the cell inner membrane. It catalyses the reaction phosphate(out) + ATP + H2O = ADP + 2 phosphate(in) + H(+). Functionally, part of the ABC transporter complex PstSACB involved in phosphate import. Responsible for energy coupling to the transport system. The protein is Phosphate import ATP-binding protein PstB 1 of Aliivibrio fischeri (strain ATCC 700601 / ES114) (Vibrio fischeri).